We begin with the raw amino-acid sequence, 199 residues long: NADH-quinone oxidoreductase subunit C (199 aa).

This sequence belongs to the complex I 30 kDa subunit family. NDH-1 is composed of 14 different subunits. Subunits NuoB, C, D, E, F, and G constitute the peripheral sector of the complex.

It localises to the cell inner membrane. The catalysed reaction is a quinone + NADH + 5 H(+)(in) = a quinol + NAD(+) + 4 H(+)(out). NDH-1 shuttles electrons from NADH, via FMN and iron-sulfur (Fe-S) centers, to quinones in the respiratory chain. The immediate electron acceptor for the enzyme in this species is believed to be ubiquinone. Couples the redox reaction to proton translocation (for every two electrons transferred, four hydrogen ions are translocated across the cytoplasmic membrane), and thus conserves the redox energy in a proton gradient. This Cupriavidus taiwanensis (strain DSM 17343 / BCRC 17206 / CCUG 44338 / CIP 107171 / LMG 19424 / R1) (Ralstonia taiwanensis (strain LMG 19424)) protein is NADH-quinone oxidoreductase subunit C.